A 95-amino-acid chain; its full sequence is MTINKETGTDPDPGYKPTLRSQDKAALKELLHTRLVECGWHKDIKEMIRNIIMERGVDNINRDQLAAQIVPQARALVPEVVKNEMMLRVHAALDK.

The protein belongs to the ENY2 family. As to expression, expressed specifically in testis.

In terms of biological role, testis-specific paralog of the ubiquitously expressed transcription and mRNA export factor e(y)2. Cannot functionally replace e(y)2. This Drosophila melanogaster (Fruit fly) protein is Enhancer of yellow 2b transcription factor (e(y)2b).